We begin with the raw amino-acid sequence, 418 residues long: Glutamyl-tRNA reductase (418 aa).

Substrate contacts are provided by residues 57-60 (TCNR), Ser-113, 118-120 (DFE), and Gln-124. Cys-58 functions as the Nucleophile in the catalytic mechanism. 193-198 (GTGKIG) is an NADP(+) binding site.

The protein belongs to the glutamyl-tRNA reductase family. In terms of assembly, homodimer.

It carries out the reaction (S)-4-amino-5-oxopentanoate + tRNA(Glu) + NADP(+) = L-glutamyl-tRNA(Glu) + NADPH + H(+). It functions in the pathway porphyrin-containing compound metabolism; protoporphyrin-IX biosynthesis; 5-aminolevulinate from L-glutamyl-tRNA(Glu): step 1/2. In terms of biological role, catalyzes the NADPH-dependent reduction of glutamyl-tRNA(Glu) to glutamate 1-semialdehyde (GSA). This chain is Glutamyl-tRNA reductase, found in Christiangramia forsetii (strain DSM 17595 / CGMCC 1.15422 / KT0803) (Gramella forsetii).